Here is a 204-residue protein sequence, read N- to C-terminus: dITP/XTP pyrophosphatase (204 aa).

11 to 16 (SRNRKK) contributes to the substrate binding site. Asp76 serves as the catalytic Proton acceptor. Residue Asp76 coordinates Mg(2+). Substrate-binding positions include Ser77, 158-161 (FGYD), Lys181, and 186-187 (HR).

This sequence belongs to the HAM1 NTPase family. In terms of assembly, homodimer. The cofactor is Mg(2+).

It catalyses the reaction XTP + H2O = XMP + diphosphate + H(+). The catalysed reaction is dITP + H2O = dIMP + diphosphate + H(+). It carries out the reaction ITP + H2O = IMP + diphosphate + H(+). Functionally, pyrophosphatase that catalyzes the hydrolysis of nucleoside triphosphates to their monophosphate derivatives, with a high preference for the non-canonical purine nucleotides XTP (xanthosine triphosphate), dITP (deoxyinosine triphosphate) and ITP. Seems to function as a house-cleaning enzyme that removes non-canonical purine nucleotides from the nucleotide pool, thus preventing their incorporation into DNA/RNA and avoiding chromosomal lesions. The sequence is that of dITP/XTP pyrophosphatase from Mycobacterium tuberculosis (strain CDC 1551 / Oshkosh).